A 337-amino-acid polypeptide reads, in one-letter code: Holliday junction branch migration complex subunit RuvB (337 aa).

Positions 4 to 185 (ADRLISNSFE…FGITQRLEYY (182 aa)) are large ATPase domain (RuvB-L). ATP is bound by residues I24, R25, G66, K69, T70, T71, 132–134 (EDY), R175, Y185, and R222. Residue T70 participates in Mg(2+) binding. Positions 186 to 256 (KVDDLKDIVQ…TAKKALDMLD (71 aa)) are small ATPAse domain (RuvB-S). Residues 259-337 (SSGFDYMDRK…HFGLDIPEAR (79 aa)) are head domain (RuvB-H). Residues R314 and R319 each coordinate DNA.

This sequence belongs to the RuvB family. Homohexamer. Forms an RuvA(8)-RuvB(12)-Holliday junction (HJ) complex. HJ DNA is sandwiched between 2 RuvA tetramers; dsDNA enters through RuvA and exits via RuvB. An RuvB hexamer assembles on each DNA strand where it exits the tetramer. Each RuvB hexamer is contacted by two RuvA subunits (via domain III) on 2 adjacent RuvB subunits; this complex drives branch migration. In the full resolvosome a probable DNA-RuvA(4)-RuvB(12)-RuvC(2) complex forms which resolves the HJ.

The protein localises to the cytoplasm. It catalyses the reaction ATP + H2O = ADP + phosphate + H(+). In terms of biological role, the RuvA-RuvB-RuvC complex processes Holliday junction (HJ) DNA during genetic recombination and DNA repair, while the RuvA-RuvB complex plays an important role in the rescue of blocked DNA replication forks via replication fork reversal (RFR). RuvA specifically binds to HJ cruciform DNA, conferring on it an open structure. The RuvB hexamer acts as an ATP-dependent pump, pulling dsDNA into and through the RuvAB complex. RuvB forms 2 homohexamers on either side of HJ DNA bound by 1 or 2 RuvA tetramers; 4 subunits per hexamer contact DNA at a time. Coordinated motions by a converter formed by DNA-disengaged RuvB subunits stimulates ATP hydrolysis and nucleotide exchange. Immobilization of the converter enables RuvB to convert the ATP-contained energy into a lever motion, pulling 2 nucleotides of DNA out of the RuvA tetramer per ATP hydrolyzed, thus driving DNA branch migration. The RuvB motors rotate together with the DNA substrate, which together with the progressing nucleotide cycle form the mechanistic basis for DNA recombination by continuous HJ branch migration. Branch migration allows RuvC to scan DNA until it finds its consensus sequence, where it cleaves and resolves cruciform DNA. The protein is Holliday junction branch migration complex subunit RuvB of Photobacterium profundum (strain SS9).